The primary structure comprises 433 residues: Pyrimidine-nucleoside phosphorylase (433 aa).

81-83 (KHS) contacts phosphate. K(+) is bound by residues Gly88 and Thr90. Phosphate-binding positions include Thr92, 108 to 110 (KMS), and Thr120. Positions 168 and 187 each coordinate substrate. K(+) contacts are provided by Leu243, Ala246, and Glu255.

This sequence belongs to the thymidine/pyrimidine-nucleoside phosphorylase family. In terms of assembly, homodimer. Requires K(+) as cofactor.

The enzyme catalyses uridine + phosphate = alpha-D-ribose 1-phosphate + uracil. It carries out the reaction thymidine + phosphate = 2-deoxy-alpha-D-ribose 1-phosphate + thymine. The catalysed reaction is 2'-deoxyuridine + phosphate = 2-deoxy-alpha-D-ribose 1-phosphate + uracil. Its function is as follows. Catalyzes phosphorolysis of the pyrimidine nucleosides uridine, thymidine and 2'-deoxyuridine with the formation of the corresponding pyrimidine base and ribose-1-phosphate. In Staphylococcus aureus (strain Mu50 / ATCC 700699), this protein is Pyrimidine-nucleoside phosphorylase (pdp).